The primary structure comprises 345 residues: Molybdate/tungstate import ATP-binding protein WtpC (345 aa).

Residues 2 to 231 (LKVESISKDY…PKSEEVARFL (230 aa)) enclose the ABC transporter domain. 33–40 (GPSGSGKT) serves as a coordination point for ATP. The Mop domain maps to 280–345 (KTSARNVFKA…FKASAIHVFP (66 aa)).

This sequence belongs to the ABC transporter superfamily. Sulfate/tungstate importer (TC 3.A.1.6) family. As to quaternary structure, the complex is composed of two ATP-binding proteins (WtpC), two transmembrane proteins (WtpB) and a solute-binding protein (WtpA).

The protein resides in the cell membrane. The catalysed reaction is tungstate(in) + ATP + H2O = tungstate(out) + ADP + phosphate + H(+). In terms of biological role, part of the ABC transporter complex WtpABC involved in molybdate/tungstate import. Responsible for energy coupling to the transport system. The protein is Molybdate/tungstate import ATP-binding protein WtpC (wtpC) of Pyrococcus horikoshii (strain ATCC 700860 / DSM 12428 / JCM 9974 / NBRC 100139 / OT-3).